The primary structure comprises 99 residues: Putative pterin-4-alpha-carbinolamine dehydratase (99 aa).

This sequence belongs to the pterin-4-alpha-carbinolamine dehydratase family.

It catalyses the reaction (4aS,6R)-4a-hydroxy-L-erythro-5,6,7,8-tetrahydrobiopterin = (6R)-L-erythro-6,7-dihydrobiopterin + H2O. This is Putative pterin-4-alpha-carbinolamine dehydratase from Saccharolobus islandicus (strain M.16.27) (Sulfolobus islandicus).